The following is a 137-amino-acid chain: uncharacterized protein (137 aa).

This is an uncharacterized protein from Mycobacterium leprae (strain TN).